A 729-amino-acid chain; its full sequence is ATP-dependent RNA helicase DHX15 homolog (729 aa).

The interval 1-25 (MSKRRIEVGETYGSKAKKDPEASSS) is disordered. A Helicase ATP-binding domain is found at 82–246 (MRLLSLHQCI…FDNAPLMKVP (165 aa)). Residue 95 to 102 (GETGSGKT) participates in ATP binding. Residues 193 to 196 (DEAH) carry the DEAH box motif. The region spanning 271-451 (TVIQIHMCEE…TVVLQLKKLG (181 aa)) is the Helicase C-terminal domain.

It belongs to the DEAD box helicase family. DEAH subfamily. DDX15/PRP43 sub-subfamily.

The catalysed reaction is ATP + H2O = ADP + phosphate + H(+). RNA helicase involved in mRNA processing and antiviral innate immunity. Acts as an activator of the p38 MAPK cascade. The sequence is that of ATP-dependent RNA helicase DHX15 homolog from Drosophila melanogaster (Fruit fly).